A 116-amino-acid chain; its full sequence is Ig heavy chain V region 1B43 (116 aa).

The N-terminal stretch at 1–18 (MRVLILLCLFTAFPGILS) is a signal peptide. A framework-1 region spans residues 19-48 (DVQLQESGPDLVKPSQSLSLTCTVTGYSIT). A disulfide bond links Cys-40 and Cys-114. The complementarity-determining-1 stretch occupies residues 49 to 53 (SGYSW). The tract at residues 54–67 (HWIRQFPGNKLEWM) is framework-2. A complementarity-determining-2 region spans residues 68–84 (GYIHYSGNTSYNPSLKS). A framework-3 region spans residues 85–116 (RISITRDTSKNQFFLQLNSVTTEDTATYYCAR).

In Mus musculus (Mouse), this protein is Ig heavy chain V region 1B43.